The sequence spans 199 residues: Dephospho-CoA kinase (199 aa).

The 197-residue stretch at 3–199 (RIGLTGGIGS…HCKYLQIAQT (197 aa)) folds into the DPCK domain. Position 11–16 (11–16 (GSGKST)) interacts with ATP.

It belongs to the CoaE family.

The protein localises to the cytoplasm. The enzyme catalyses 3'-dephospho-CoA + ATP = ADP + CoA + H(+). The protein operates within cofactor biosynthesis; coenzyme A biosynthesis; CoA from (R)-pantothenate: step 5/5. Catalyzes the phosphorylation of the 3'-hydroxyl group of dephosphocoenzyme A to form coenzyme A. The sequence is that of Dephospho-CoA kinase from Coxiella burnetii (strain RSA 493 / Nine Mile phase I).